We begin with the raw amino-acid sequence, 257 residues long: MLHNIRIVLVETSHTGNMGSTARAMKTMGLTNLYLVNPLVKPDSQAIALSAGASDVIGNATIVDTLDEALAGCSLVVGTSARSRTLPWPMLEPRECGVRSAREAEHAPVALVFGRERVGLTNDELQKCHYHVAIPANPEYSSLNLAMAVQILAYEVRVAFLDRQQAAAPIVEEEEAPYPLVDDLERFYLHLEQVLSHTGFIRQAHPGQIMSKLRRLFTRARPEAQELNILRGMLTSIEKQDKYPQRGADGSEHNGKN.

Residues T79–A81, G114, I134, and S141–L143 contribute to the S-adenosyl-L-methionine site.

The protein belongs to the class IV-like SAM-binding methyltransferase superfamily. RNA methyltransferase TrmH family. As to quaternary structure, homodimer.

The protein localises to the cytoplasm. It carries out the reaction cytidine(32) in tRNA + S-adenosyl-L-methionine = 2'-O-methylcytidine(32) in tRNA + S-adenosyl-L-homocysteine + H(+). The catalysed reaction is uridine(32) in tRNA + S-adenosyl-L-methionine = 2'-O-methyluridine(32) in tRNA + S-adenosyl-L-homocysteine + H(+). In terms of biological role, catalyzes the formation of 2'O-methylated cytidine (Cm32) or 2'O-methylated uridine (Um32) at position 32 in tRNA. This chain is tRNA (cytidine/uridine-2'-O-)-methyltransferase TrmJ (trmJ), found in Yersinia enterocolitica serotype O:8 / biotype 1B (strain NCTC 13174 / 8081).